The primary structure comprises 310 residues: UDP-N-acetylenolpyruvoylglucosamine reductase (310 aa).

Residues 31–216 (KIGGPADYFV…LRKIEELNQA (186 aa)) form the FAD-binding PCMH-type domain. R180 is an active-site residue. S230 acts as the Proton donor in catalysis. E300 is an active-site residue.

The protein belongs to the MurB family. FAD is required as a cofactor.

It is found in the cytoplasm. It carries out the reaction UDP-N-acetyl-alpha-D-muramate + NADP(+) = UDP-N-acetyl-3-O-(1-carboxyvinyl)-alpha-D-glucosamine + NADPH + H(+). Its pathway is cell wall biogenesis; peptidoglycan biosynthesis. In terms of biological role, cell wall formation. The sequence is that of UDP-N-acetylenolpyruvoylglucosamine reductase from Lachnoclostridium phytofermentans (strain ATCC 700394 / DSM 18823 / ISDg) (Clostridium phytofermentans).